The sequence spans 444 residues: tRNA-2-methylthio-N(6)-dimethylallyladenosine synthase (444 aa).

The MTTase N-terminal domain maps to 10–126 (SSFYIHTFGC…LAGLVAGLRE (117 aa)). [4Fe-4S] cluster-binding residues include Cys19, Cys55, Cys89, Cys163, Cys167, and Cys170. The Radical SAM core domain maps to 149–379 (RAGSISAFLP…IELQNAISRE (231 aa)). Residues 382 to 444 (QREIGKTVEV…TSATLSGEAV (63 aa)) form the TRAM domain.

Belongs to the methylthiotransferase family. MiaB subfamily. As to quaternary structure, monomer. It depends on [4Fe-4S] cluster as a cofactor.

It is found in the cytoplasm. The enzyme catalyses N(6)-dimethylallyladenosine(37) in tRNA + (sulfur carrier)-SH + AH2 + 2 S-adenosyl-L-methionine = 2-methylsulfanyl-N(6)-dimethylallyladenosine(37) in tRNA + (sulfur carrier)-H + 5'-deoxyadenosine + L-methionine + A + S-adenosyl-L-homocysteine + 2 H(+). Its function is as follows. Catalyzes the methylthiolation of N6-(dimethylallyl)adenosine (i(6)A), leading to the formation of 2-methylthio-N6-(dimethylallyl)adenosine (ms(2)i(6)A) at position 37 in tRNAs that read codons beginning with uridine. This chain is tRNA-2-methylthio-N(6)-dimethylallyladenosine synthase, found in Chlorobaculum tepidum (strain ATCC 49652 / DSM 12025 / NBRC 103806 / TLS) (Chlorobium tepidum).